A 202-amino-acid polypeptide reads, in one-letter code: NADH-quinone oxidoreductase subunit C (202 aa).

This sequence belongs to the complex I 30 kDa subunit family. In terms of assembly, NDH-1 is composed of 14 different subunits. Subunits NuoB, C, D, E, F, and G constitute the peripheral sector of the complex.

The protein resides in the cell inner membrane. It catalyses the reaction a quinone + NADH + 5 H(+)(in) = a quinol + NAD(+) + 4 H(+)(out). In terms of biological role, NDH-1 shuttles electrons from NADH, via FMN and iron-sulfur (Fe-S) centers, to quinones in the respiratory chain. The immediate electron acceptor for the enzyme in this species is believed to be ubiquinone. Couples the redox reaction to proton translocation (for every two electrons transferred, four hydrogen ions are translocated across the cytoplasmic membrane), and thus conserves the redox energy in a proton gradient. This chain is NADH-quinone oxidoreductase subunit C, found in Brucella canis (strain ATCC 23365 / NCTC 10854 / RM-666).